A 1019-amino-acid chain; its full sequence is Pleckstrin homology domain-containing family M member 2 (1019 aa).

Met-1 is subject to N-acetylmethionine. The tract at residues Met-1–Leu-310 is interaction with KIF5B. Positions Arg-36–Pro-158 constitute an RUN domain. 3 disordered regions span residues Ser-230–Leu-458, Ser-471–Gln-525, and Gln-557–Val-581. Composition is skewed to polar residues over residues Asp-243–Phe-272 and Thr-279–Thr-291. The segment covering Val-315–Ser-327 has biased composition (basic residues). Residues Leu-417–Cys-427 are compositionally biased toward polar residues. Ser-441 is modified (phosphoserine). Residues Pro-516 to Gln-525 show a composition bias toward basic and acidic residues. Positions Pro-762–Pro-885 are interaction with sifA. The 103-residue stretch at Thr-771–Ser-873 folds into the PH domain.

As to quaternary structure, interacts with KLC2 (via TPR repeats). Interacts with KIF5B. Interacts with BORCS5. Interacts (via RUN domain) with ARL8B (GTP-bound form); PLEKHM1 and PLEKHM2 compete for interaction with ARL8B. Interacts with ARL8A. (Microbial infection) Interacts with the S.typhimurium sifA protein; required for S.typhimurium infection.

Its subcellular location is the cytoplasm. It is found in the lysosome membrane. Functionally, plays a role in lysosomes movement and localization at the cell periphery acting as an effector of ARL8B. Required for ARL8B to exert its effects on lysosome location, recruits kinesin-1 to lysosomes and hence direct their movement toward microtubule plus ends. Binding to ARL8B provides a link from lysosomal membranes to plus-end-directed motility. Critical factor involved in NK cell-mediated cytotoxicity. Drives the polarization of cytolytic granules and microtubule-organizing centers (MTOCs) toward the immune synapse between effector NK lymphocytes and target cells. Required for maintenance of the Golgi apparatus organization. May play a role in membrane tubulation. The sequence is that of Pleckstrin homology domain-containing family M member 2 from Homo sapiens (Human).